A 393-amino-acid chain; its full sequence is ATP phosphoribosyltransferase regulatory subunit (393 aa).

This sequence belongs to the class-II aminoacyl-tRNA synthetase family. HisZ subfamily. In terms of assembly, heteromultimer composed of HisG and HisZ subunits.

It localises to the cytoplasm. It participates in amino-acid biosynthesis; L-histidine biosynthesis; L-histidine from 5-phospho-alpha-D-ribose 1-diphosphate: step 1/9. In terms of biological role, required for the first step of histidine biosynthesis. May allow the feedback regulation of ATP phosphoribosyltransferase activity by histidine. The sequence is that of ATP phosphoribosyltransferase regulatory subunit from Synechococcus sp. (strain RCC307).